The following is a 440-amino-acid chain: RNA polymerase II C-terminal domain phosphatase-like 4 (440 aa).

Over residues 1-36 (MSVASDSPVHSSSSSDDLAAFLDAELDSASDASSGP) the composition is skewed to low complexity. The disordered stretch occupies residues 1–49 (MSVASDSPVHSSSSSDDLAAFLDAELDSASDASSGPSEEEEAEDDVESG). A compositionally biased stretch (acidic residues) spans 37 to 47 (SEEEEAEDDVE). The FCP1 homology domain maps to 118-292 (QRQRKLYLVL…DHRYKSLSEL (175 aa)). The BRCT domain maps to 337–429 (VRKEILKGCK…MKQPEENFGL (93 aa)).

As to quaternary structure, interacts with RAP74. Mg(2+) is required as a cofactor. The cofactor is Co(2+). Requires Mn(2+) as cofactor.

It is found in the nucleus. It carries out the reaction O-phospho-L-seryl-[protein] + H2O = L-seryl-[protein] + phosphate. It catalyses the reaction O-phospho-L-threonyl-[protein] + H2O = L-threonyl-[protein] + phosphate. Processively dephosphorylates 'Ser-2' and/or 'Ser-5' of the heptad repeats YSPTSPS in the C-terminal domain of the largest RNA polymerase II subunit (RPB1). This promotes the activity of RNA polymerase II. Required for normal plant growth. The sequence is that of RNA polymerase II C-terminal domain phosphatase-like 4 (CPL4) from Arabidopsis thaliana (Mouse-ear cress).